Here is a 143-residue protein sequence, read N- to C-terminus: MKKILVLNGPNINMLGIREPAVYGNITLAEIEKSLSSLAKELKVEVEFFQSNHEGKIVDKIQDSINKIFGIIINPAALTHTSITIRDALSSISVPTIEVHISNIYAREEFRHKSYIAAEAIGQIAGLGIDGYLFALRKMVSLM.

The Proton acceptor role is filled by Tyr-23. Residues Asn-74, His-80, and Asp-87 each contribute to the substrate site. The active-site Proton donor is the His-100. Substrate is bound by residues 101-102 (IS) and Arg-111.

Belongs to the type-II 3-dehydroquinase family. As to quaternary structure, homododecamer.

The catalysed reaction is 3-dehydroquinate = 3-dehydroshikimate + H2O. It participates in metabolic intermediate biosynthesis; chorismate biosynthesis; chorismate from D-erythrose 4-phosphate and phosphoenolpyruvate: step 3/7. Functionally, catalyzes a trans-dehydration via an enolate intermediate. This is 3-dehydroquinate dehydratase from Endomicrobium trichonymphae.